Consider the following 978-residue polypeptide: Regulator of telomere elongation helicase 1 homolog (978 aa).

A Helicase ATP-binding domain is found at 7-318 (NGIPVNFPFE…EDDDAKKDFT (312 aa)). Position 42–49 (42–49 (SPTGTGKT)) interacts with ATP. Cysteine 159, cysteine 177, cysteine 186, and cysteine 222 together coordinate [4Fe-4S] cluster. A DEAH box motif is present at residues 265–268 (DEAH).

This sequence belongs to the helicase family. RAD3/XPD subfamily.

The protein localises to the nucleus. The enzyme catalyses ATP + H2O = ADP + phosphate + H(+). Its function is as follows. A probable ATP-dependent DNA helicase implicated in DNA repair and the maintenance of genomic stability. Acts as an anti-recombinase to counteract toxic recombination and limit crossover during meiosis. Regulates meiotic recombination and crossover homeostasis by physically dissociating strand invasion events and thereby promotes noncrossover repair by meiotic synthesis dependent strand annealing (SDSA) as well as disassembly of D loop recombination intermediates. The protein is Regulator of telomere elongation helicase 1 homolog of Culex quinquefasciatus (Southern house mosquito).